We begin with the raw amino-acid sequence, 230 residues long: MVKRSKKYREAAERVDRNNLYTANEAIALLKSMPSYNFDQTVEAVFRLSVDPRKADQLVRGTVNLPHGTGKTAKVLVFARGPKATEATEAGADIVGDDDLIAKVQGGFLDFDAVVATPDMMGKVGRLGRVLGPRGLMPNPKTGTVTMDVTKAVKDIKGGKIEFRVDKNGNLSFLIGKMSFDESALDENFKAVADEVKRLKPSTVKGRYLTKATITSTMNPGVPVDPNTLA.

It belongs to the universal ribosomal protein uL1 family. Part of the 50S ribosomal subunit.

In terms of biological role, binds directly to 23S rRNA. The L1 stalk is quite mobile in the ribosome, and is involved in E site tRNA release. Protein L1 is also a translational repressor protein, it controls the translation of the L11 operon by binding to its mRNA. The polypeptide is Large ribosomal subunit protein uL1 (Bifidobacterium longum (strain DJO10A)).